Consider the following 479-residue polypeptide: Probable cytosol aminopeptidase (479 aa).

Mn(2+) is bound by residues lysine 251 and aspartate 256. The active site involves lysine 263. Positions 274, 333, and 335 each coordinate Mn(2+). Arginine 337 is an active-site residue.

The protein belongs to the peptidase M17 family. The cofactor is Mn(2+).

It is found in the cytoplasm. The enzyme catalyses Release of an N-terminal amino acid, Xaa-|-Yaa-, in which Xaa is preferably Leu, but may be other amino acids including Pro although not Arg or Lys, and Yaa may be Pro. Amino acid amides and methyl esters are also readily hydrolyzed, but rates on arylamides are exceedingly low.. The catalysed reaction is Release of an N-terminal amino acid, preferentially leucine, but not glutamic or aspartic acids.. Presumably involved in the processing and regular turnover of intracellular proteins. Catalyzes the removal of unsubstituted N-terminal amino acids from various peptides. In Albidiferax ferrireducens (strain ATCC BAA-621 / DSM 15236 / T118) (Rhodoferax ferrireducens), this protein is Probable cytosol aminopeptidase.